The following is a 349-amino-acid chain: DNA polymerase IV (349 aa).

A UmuC domain is found at 7–188 (IIHIDMDYFF…LPVKKLFGVG (182 aa)). Mg(2+)-binding residues include Asp-11 and Asp-106. Glu-107 is a catalytic residue.

It belongs to the DNA polymerase type-Y family. As to quaternary structure, monomer. Mg(2+) serves as cofactor.

The protein localises to the cytoplasm. The enzyme catalyses DNA(n) + a 2'-deoxyribonucleoside 5'-triphosphate = DNA(n+1) + diphosphate. Poorly processive, error-prone DNA polymerase involved in untargeted mutagenesis. Copies undamaged DNA at stalled replication forks, which arise in vivo from mismatched or misaligned primer ends. These misaligned primers can be extended by PolIV. Exhibits no 3'-5' exonuclease (proofreading) activity. May be involved in translesional synthesis, in conjunction with the beta clamp from PolIII. The chain is DNA polymerase IV from Francisella tularensis subsp. holarctica (strain OSU18).